A 68-amino-acid polypeptide reads, in one-letter code: Large ribosomal subunit protein bL35 (68 aa).

Belongs to the bacterial ribosomal protein bL35 family.

The protein is Large ribosomal subunit protein bL35 of Rickettsia typhi (strain ATCC VR-144 / Wilmington).